A 156-amino-acid chain; its full sequence is 6,7-dimethyl-8-ribityllumazine synthase (156 aa).

5-amino-6-(D-ribitylamino)uracil-binding positions include Phe-22, 57 to 59 (AYE), and 81 to 83 (TVI). 86 to 87 (GT) contacts (2S)-2-hydroxy-3-oxobutyl phosphate. His-89 serves as the catalytic Proton donor. Position 114 (Phe-114) interacts with 5-amino-6-(D-ribitylamino)uracil. Arg-128 contacts (2S)-2-hydroxy-3-oxobutyl phosphate.

Belongs to the DMRL synthase family. Forms an icosahedral capsid composed of 60 subunits, arranged as a dodecamer of pentamers.

The catalysed reaction is (2S)-2-hydroxy-3-oxobutyl phosphate + 5-amino-6-(D-ribitylamino)uracil = 6,7-dimethyl-8-(1-D-ribityl)lumazine + phosphate + 2 H2O + H(+). It participates in cofactor biosynthesis; riboflavin biosynthesis; riboflavin from 2-hydroxy-3-oxobutyl phosphate and 5-amino-6-(D-ribitylamino)uracil: step 1/2. In terms of biological role, catalyzes the formation of 6,7-dimethyl-8-ribityllumazine by condensation of 5-amino-6-(D-ribitylamino)uracil with 3,4-dihydroxy-2-butanone 4-phosphate. This is the penultimate step in the biosynthesis of riboflavin. This chain is 6,7-dimethyl-8-ribityllumazine synthase, found in Cronobacter sakazakii (strain ATCC BAA-894) (Enterobacter sakazakii).